The primary structure comprises 308 residues: tRNA pseudouridine synthase B (308 aa).

The Nucleophile role is filled by aspartate 47.

This sequence belongs to the pseudouridine synthase TruB family. Type 1 subfamily.

The enzyme catalyses uridine(55) in tRNA = pseudouridine(55) in tRNA. Responsible for synthesis of pseudouridine from uracil-55 in the psi GC loop of transfer RNAs. The chain is tRNA pseudouridine synthase B from Rhodospirillum rubrum (strain ATCC 11170 / ATH 1.1.1 / DSM 467 / LMG 4362 / NCIMB 8255 / S1).